Reading from the N-terminus, the 465-residue chain is Interferon-inducible GTPase 5 (465 aa).

Residues 53-235 (TRLEVGVTGE…PLLMSTWERD (183 aa)) form the IRG-type G domain. GTP contacts are provided by residues 62–69 (ESGAGKSS), 87–91 (TGVVE), 169–171 (KVD), and 216–218 (SNL). Phosphoserine is present on residues S247 and S304. Positions 405-438 (EEEEDTQPDVSLEAAGDNGVEKRGSGEGSMEEAP) are disordered.

The protein belongs to the TRAFAC class dynamin-like GTPase superfamily. IRG family.

It is found in the cell projection. Its subcellular location is the cilium. It localises to the flagellum. The protein localises to the lipid droplet. The catalysed reaction is GTP + H2O = GDP + phosphate + H(+). Required for sperm motility and therefore male fertility, via positive regulation of spermatozoa fibrous sheath formation. This Bos taurus (Bovine) protein is Interferon-inducible GTPase 5 (IRGC).